We begin with the raw amino-acid sequence, 161 residues long: Nucleotide-binding protein RC1_3464 (161 aa).

This sequence belongs to the YajQ family.

Nucleotide-binding protein. The sequence is that of Nucleotide-binding protein RC1_3464 from Rhodospirillum centenum (strain ATCC 51521 / SW).